An 823-amino-acid polypeptide reads, in one-letter code: Putative ankyrin repeat domain-containing protein 20A3 (823 aa).

ANK repeat units lie at residues 66–95 (QHRT…QIDV), 99–128 (ENRT…NPNL), 132–161 (YGNT…HIEA), 165–194 (DNNT…SSHA), and 198–227 (LRRS…DVFA). Disordered stretches follow at residues 301-343 (VPEK…EVED) and 355-402 (VQTL…LSEN). Over residues 372 to 384 (QERHERSEKKQPQ) the composition is skewed to basic and acidic residues. Coiled coils occupy residues 431-480 (KKLK…KQLE), 571-724 (AFRY…NNST), and 776-805 (LVLE…EKTE).

This Homo sapiens (Human) protein is Putative ankyrin repeat domain-containing protein 20A3.